The primary structure comprises 304 residues: Insulin-like growth factor-binding protein 2 (304 aa).

Positions 1–34 (MLPRLGGPALPLLLPSLLLLLLLGAGGCGPGVRA) are cleaved as a signal peptide. The 83-residue stretch at 36-118 (VLFRCPPCTP…VTGAGTCEKR (83 aa)) folds into the IGFBP N-terminal domain. Cystine bridges form between Cys-40-Cys-68, Cys-43-Cys-70, Cys-51-Cys-71, Cys-59-Cys-74, Cys-82-Cys-95, Cys-89-Cys-115, Cys-206-Cys-240, Cys-251-Cys-262, and Cys-264-Cys-285. The 83-residue stretch at 203-285 (RTPCQQELDQ…APTIRGDPEC (83 aa)) folds into the Thyroglobulin type-1 domain. Residues 280–282 (RGD) carry the Cell attachment site motif.

Interacts with IGF1. Interacts with IGF2. Interacts (via RGD motif) with integrin alpha5/ITGA5; this interaction induces cell migration, adhesion or apoptosis according to the context. Interacts with PTPRB; this interaction leads to PTPRB dimerization and inactivation. In terms of processing, cleaved by MMP9 leading to release of free IGF2 from IGFBP2-IGF2 complex, which contributes to enhance the motility and the growth of astrocytes. Post-translationally, O-glycosylated. As to expression, in adults, expressed in brain, testes, ovaries, and kidney. Expression in the adult liver is barely detectable.

The protein resides in the secreted. In terms of biological role, multifunctional protein that plays a critical role in regulating the availability of IGFs such as IGF1 and IGF2 to their receptors and thereby regulates IGF-mediated cellular processes including proliferation, differentiation, and apoptosis in a cell-type specific manner. Functions coordinately with receptor protein tyrosine phosphatase beta/PTPRB and the IGF1 receptor to regulate IGF1-mediated signaling by stimulating the phosphorylation of PTEN leading to its inactivation and AKT1 activation. Plays a positive role in cell migration via interaction with integrin alpha5/ITGA5 through an RGD motif. Additionally, interaction with ITGA5/ITGB1 enhances the adhesion of endothelial progenitor cells to endothelial cells. Upon mitochondrial damage, facilitates apoptosis with ITGA5 of podocytes, and then activates the phosphorylation of focal adhesion kinase (FAK)-mediated mitochondrial injury. This chain is Insulin-like growth factor-binding protein 2 (Igfbp2), found in Rattus norvegicus (Rat).